Consider the following 500-residue polypeptide: MDVFKQSEVWFVIGSQNLYGPKTLQQVMDNAHHVVNSLNSEAGLPVKLVLKPLVTTPDEITALCREANYDTACIGVMTWLHTFSPAKMWIGGLSILHKPLLQFHTQFNAQIPWETMDMDFMNLNQTAHGGREFGFIGARMRQQHSVITGHWQDKEAHQRISQWMRVAAAKQENQQLKVARFGDNMREVAVTEGDKVAAQIQFGYSVNAYGIGDLVTVVDAVSKGEIDALVEEYEATYRLTDAVQLHGNKRENLLDAARIELGMKRFLEQGGFKAFTTNFENLYGLKQLPGLAVQRLMQQGYGFGGEGDWKTAALLRILKVMGTGLKGGTSFMEDYTYNFQPGNDLVVGSHMLEVCPSIAKEEKPLLDVQHLGIGGKADPARLIFSTPAGPALNASLIDMGNRFRLLVNVVDTVEQPHPLPKLPVARAIWQAQPSLATAAEAWIIAGGAHHTVFSQAIGVDELRLYAEMHGIEFLLIDNDTTLPAFKNEIRWNEVYYHLNR.

Residues Glu306, Glu333, His350, and His450 each coordinate Mn(2+).

This sequence belongs to the arabinose isomerase family. Homohexamer. Mn(2+) serves as cofactor.

The enzyme catalyses beta-L-arabinopyranose = L-ribulose. The protein operates within carbohydrate degradation; L-arabinose degradation via L-ribulose; D-xylulose 5-phosphate from L-arabinose (bacterial route): step 1/3. Functionally, catalyzes the conversion of L-arabinose to L-ribulose. This is L-arabinose isomerase from Yersinia enterocolitica serotype O:8 / biotype 1B (strain NCTC 13174 / 8081).